We begin with the raw amino-acid sequence, 380 residues long: Cytochrome b (380 aa).

4 helical membrane passes run 34-54, 78-99, 114-134, and 179-199; these read FGSLLAVCLVTQILTGLLLAM, WLIRNLHANGASFFFICIFLHI, WNTGVILLLTLMATAFVGYVL, and FFALHFLLPFVIAGITIIHLT. Residues histidine 84 and histidine 98 each coordinate heme b. Histidine 183 and histidine 197 together coordinate heme b. Histidine 202 is a binding site for a ubiquinone. 4 helical membrane-spanning segments follow: residues 227–247, 289–309, 321–341, and 348–368; these read IKDILGLTLMFIPFLTLALFS, LGGVLALAASVLILLLIPFLH, LSQTLFWLLVANLLILTWIGS, and FIIIGQMASLSYFSILLILFP.

The protein belongs to the cytochrome b family. As to quaternary structure, the cytochrome bc1 complex contains 11 subunits: 3 respiratory subunits (MT-CYB, CYC1 and UQCRFS1), 2 core proteins (UQCRC1 and UQCRC2) and 6 low-molecular weight proteins (UQCRH/QCR6, UQCRB/QCR7, UQCRQ/QCR8, UQCR10/QCR9, UQCR11/QCR10 and a cleavage product of UQCRFS1). This cytochrome bc1 complex then forms a dimer. The cofactor is heme b.

It is found in the mitochondrion inner membrane. Component of the ubiquinol-cytochrome c reductase complex (complex III or cytochrome b-c1 complex) that is part of the mitochondrial respiratory chain. The b-c1 complex mediates electron transfer from ubiquinol to cytochrome c. Contributes to the generation of a proton gradient across the mitochondrial membrane that is then used for ATP synthesis. This Alectoris chukar (Chukar partridge) protein is Cytochrome b (MT-CYB).